We begin with the raw amino-acid sequence, 553 residues long: ATP synthase F(1) complex subunit alpha, mitochondrial (553 aa).

The N-terminal 43 residues, 1–43 (MLSVRVAAAVARALPRRAGLVSKNALGSSFVAARNLHASNTRL), are a transit peptide targeting the mitochondrion. Ser-53 and Ser-65 each carry phosphoserine. Ser-76 is modified (phosphoserine; alternate). Ser-76 carries an O-linked (GlcNAc) serine; alternate glycan. The residue at position 106 (Ser-106) is a Phosphoserine. Residues Lys-123, Lys-126, and Lys-132 each carry the N6-acetyllysine modification. Position 134 is a phosphothreonine (Thr-134). Lys-161 is subject to N6-acetyllysine; alternate. Position 161 is an N6-succinyllysine; alternate (Lys-161). Ser-166 is subject to Phosphoserine. At Lys-167 the chain carries N6-acetyllysine; alternate. The residue at position 167 (Lys-167) is an N6-succinyllysine; alternate. Position 184 is a phosphoserine (Ser-184). At Arg-204 the chain carries Omega-N-methylarginine. Residues Gln-215, Gly-217, Lys-218, Thr-219, and Ser-220 each contribute to the ATP site. Residue Thr-219 participates in Mg(2+) binding. 2 positions are modified to N6-acetyllysine; alternate: Lys-230 and Lys-239. N6-succinyllysine; alternate is present on residues Lys-230 and Lys-239. Lys-240 is modified (N6-acetyllysine). Lys-261 and Lys-305 each carry N6-acetyllysine; alternate. Residues Lys-261 and Lys-305 each carry the N6-succinyllysine; alternate modification. Asp-312 lines the Mg(2+) pocket. Lys-427 is subject to N6-acetyllysine; alternate. Lys-427 is subject to N6-succinyllysine; alternate. Lys-434 bears the N6-acetyllysine mark. Residues Gln-473 and Gln-475 each coordinate ATP. An N6-acetyllysine; alternate mark is found at Lys-498, Lys-506, Lys-531, and Lys-539. N6-succinyllysine; alternate occurs at positions 498, 506, 531, and 539. The residue at position 541 (Lys-541) is an N6-acetyllysine.

The protein belongs to the ATPase alpha/beta chains family. In terms of assembly, homotrimer. Component of the ATP synthase complex composed at least of ATP5F1A/subunit alpha, ATP5F1B/subunit beta, ATP5MC1/subunit c (homooctomer), MT-ATP6/subunit a, MT-ATP8/subunit 8, ATP5ME/subunit e, ATP5MF/subunit f, ATP5MG/subunit g, ATP5MK/subunit k, ATP5MJ/subunit j, ATP5F1C/subunit gamma, ATP5F1D/subunit delta, ATP5F1E/subunit epsilon, ATP5PF/subunit F6, ATP5PB/subunit b, ATP5PD/subunit d, ATP5PO/subunit OSCP. ATP synthase complex consists of a soluble F(1) head domain (subunits alpha(3) and beta(3)) - the catalytic core - and a membrane F(0) domain - the membrane proton channel (subunits c, a, 8, e, f, g, k and j). These two domains are linked by a central stalk (subunits gamma, delta, and epsilon) rotating inside the F1 region and a stationary peripheral stalk (subunits F6, b, d, and OSCP). Interacts with ATPAF2. Interacts with HRG; the interaction occurs on the surface of T-cells and alters the cell morphology when associated with concanavalin (in vitro). Interacts with PLG (angiostatin peptide); the interaction inhibits most of the angiogenic properties of angiostatin. Interacts with BLOC1S1. Interacts with BCL2L1 isoform BCL-X(L); the interaction mediates the association of BCL2L1 isoform BCL-X(L) with the mitochondrial membrane F(1)F(0) ATP synthase and enhances neurons metabolic efficiency. Interacts with CLN5 and PPT1. Interacts with S100A1; this interaction increases F1-ATPase activity. Interacts with ABCB7; this interaction allows the regulation of cellular iron homeostasis and cellular reactive oxygen species (ROS) levels in cardiomyocytes. In terms of processing, acetylated on lysine residues. BLOC1S1 is required for acetylation. As to expression, expressed in heart (at protein level).

The protein localises to the mitochondrion. It localises to the mitochondrion inner membrane. Its subcellular location is the cell membrane. Subunit alpha, of the mitochondrial membrane ATP synthase complex (F(1)F(0) ATP synthase or Complex V) that produces ATP from ADP in the presence of a proton gradient across the membrane which is generated by electron transport complexes of the respiratory chain. ATP synthase complex consist of a soluble F(1) head domain - the catalytic core - and a membrane F(1) domain - the membrane proton channel. These two domains are linked by a central stalk rotating inside the F(1) region and a stationary peripheral stalk. During catalysis, ATP synthesis in the catalytic domain of F(1) is coupled via a rotary mechanism of the central stalk subunits to proton translocation. In vivo, can only synthesize ATP although its ATP hydrolase activity can be activated artificially in vitro. With the catalytic subunit beta (ATP5F1B), forms the catalytic core in the F(1) domain. Subunit alpha does not bear the catalytic high-affinity ATP-binding sites. In Sus scrofa (Pig), this protein is ATP synthase F(1) complex subunit alpha, mitochondrial.